A 299-amino-acid chain; its full sequence is Probable endonuclease 4 (299 aa).

Positions 68, 110, 145, 179, 182, 214, 227, 229, and 259 each coordinate Zn(2+).

The protein belongs to the AP endonuclease 2 family. Zn(2+) is required as a cofactor.

It catalyses the reaction Endonucleolytic cleavage to 5'-phosphooligonucleotide end-products.. In terms of biological role, endonuclease IV plays a role in DNA repair. It cleaves phosphodiester bonds at apurinic or apyrimidinic (AP) sites, generating a 3'-hydroxyl group and a 5'-terminal sugar phosphate. The protein is Probable endonuclease 4 of Exiguobacterium sibiricum (strain DSM 17290 / CCUG 55495 / CIP 109462 / JCM 13490 / 255-15).